Reading from the N-terminus, the 899-residue chain is Protein translocase subunit SecA (899 aa).

Residues glutamine 89, 107-111 (GEGKT), and aspartate 502 contribute to the ATP site. Zn(2+) is bound by residues cysteine 882, cysteine 884, cysteine 893, and histidine 894.

It belongs to the SecA family. In terms of assembly, monomer and homodimer. Part of the essential Sec protein translocation apparatus which comprises SecA, SecYEG and auxiliary proteins SecDF-YajC and YidC. The cofactor is Zn(2+).

It is found in the cell inner membrane. It localises to the cytoplasm. It catalyses the reaction ATP + H2O + cellular proteinSide 1 = ADP + phosphate + cellular proteinSide 2.. Functionally, part of the Sec protein translocase complex. Interacts with the SecYEG preprotein conducting channel. Has a central role in coupling the hydrolysis of ATP to the transfer of proteins into and across the cell membrane, serving both as a receptor for the preprotein-SecB complex and as an ATP-driven molecular motor driving the stepwise translocation of polypeptide chains across the membrane. The chain is Protein translocase subunit SecA from Allorhizobium ampelinum (strain ATCC BAA-846 / DSM 112012 / S4) (Agrobacterium vitis (strain S4)).